The chain runs to 162 residues: HTH-type transcriptional regulator IscR (162 aa).

Residues 2–131 (RLTSKGRYAV…NNITLGELVN (130 aa)) form the HTH rrf2-type domain. A DNA-binding region (H-T-H motif) is located at residues 28–51 (LADISERQGISLSYLEQLFSRLRK). Residues Cys92, Cys98, and Cys104 each contribute to the [2Fe-2S] cluster site.

It depends on [2Fe-2S] cluster as a cofactor.

In terms of biological role, regulates the transcription of several operons and genes involved in the biogenesis of Fe-S clusters and Fe-S-containing proteins. The chain is HTH-type transcriptional regulator IscR from Shigella sonnei (strain Ss046).